A 261-amino-acid chain; its full sequence is Zinc import ATP-binding protein ZnuC (261 aa).

The ABC transporter domain occupies 5–220; it reads ISLKALSVTF…PSYIALFGSA (216 aa). 37–44 is an ATP binding site; it reads GPNGAGKS. Positions 236–261 are disordered; that stretch reads HHDLAGQPVSGDATQCNHHHHGHHHD. Positions 252–261 are enriched in basic residues; sequence NHHHHGHHHD.

This sequence belongs to the ABC transporter superfamily. Zinc importer (TC 3.A.1.15.5) family. In terms of assembly, the complex is composed of two ATP-binding proteins (ZnuC), two transmembrane proteins (ZnuB) and a solute-binding protein (ZnuA).

The protein localises to the cell inner membrane. The catalysed reaction is Zn(2+)(out) + ATP(in) + H2O(in) = Zn(2+)(in) + ADP(in) + phosphate(in) + H(+)(in). Part of the ABC transporter complex ZnuABC involved in zinc import. Responsible for energy coupling to the transport system. The chain is Zinc import ATP-binding protein ZnuC from Vibrio vulnificus (strain CMCP6).